Reading from the N-terminus, the 133-residue chain is Cytochrome c-type biogenesis protein CcmE (133 aa).

At 1 to 7 the chain is on the cytoplasmic side; sequence MKKKHKR. A helical; Signal-anchor for type II membrane protein transmembrane segment spans residues 8–28; sequence LLITSGIFCFLSCIVFFILTT. The Periplasmic segment spans residues 29–133; that stretch reads LKENISFFYT…YMPKVLKQIP (105 aa). The heme site is built by His-120 and Tyr-124.

This sequence belongs to the CcmE/CycJ family.

The protein resides in the cell inner membrane. Functionally, heme chaperone required for the biogenesis of c-type cytochromes. Transiently binds heme delivered by CcmC and transfers the heme to apo-cytochromes in a process facilitated by CcmF and CcmH. This Wolbachia sp. subsp. Drosophila simulans (strain wRi) protein is Cytochrome c-type biogenesis protein CcmE.